The primary structure comprises 604 residues: Kelch-like protein 20 (604 aa).

The BTB domain maps to 63–130 (CDVVLVVGAK…SYTSQITVEE (68 aa)). Residues 165–267 (CLGIRAFADT…SPKFLVGTVG (103 aa)) form the BACK domain. Kelch repeat units lie at residues 314 to 360 (VLFA…VLDD), 362 to 408 (LYAV…VLGG), 409 to 455 (YLYA…VLGG), 457 to 502 (LYAV…VYQD), 504 to 549 (IYAV…VVNG), and 551 to 596 (LMAV…VIKM).

In terms of assembly, component of the BCR(KLHL20) E3 ubiquitin ligase complex, at least composed of cul3, klhl20 and rbx1.

Its subcellular location is the cytoplasm. It localises to the perinuclear region. The protein resides in the nucleus. Its pathway is protein modification; protein ubiquitination. In terms of biological role, substrate-specific adapter of a BCR (BTB-CUL3-RBX1) E3 ubiquitin-protein ligase complex involved in interferon response and anterograde Golgi to endosome transport. The BCR(KLHL20) E3 ubiquitin ligase complex mediates the ubiquitination of target proteins, leading to their degradation by the proteasome. It also specifically mediates 'Lys-33'-linked ubiquitination. The chain is Kelch-like protein 20 (klhl20) from Xenopus laevis (African clawed frog).